Here is a 333-residue protein sequence, read N- to C-terminus: DNA-3-methyladenine glycosylase (333 aa).

Residues 1-14 (MPARGGSARPGRGA) show a composition bias toward low complexity. The interval 1–42 (MPARGGSARPGRGALKPVSVTLLPDTEQPPFLGRARRPGNAR) is disordered. Phosphoserine occurs at positions 98 and 272.

It belongs to the DNA glycosylase MPG family. In terms of assembly, binds MBD1. Binds SSBP1.

It is found in the cytoplasm. The protein localises to the mitochondrion matrix. The protein resides in the mitochondrion nucleoid. It localises to the nucleus. The catalysed reaction is Hydrolysis of alkylated DNA, releasing 3-methyladenine, 3-methylguanine, 7-methylguanine and 7-methyladenine.. Its activity is regulated as follows. Binding to SSBP1 in mitochondria inhibits glycosylase activity in the context of a single-stranded DNA (ssDNA), but not a double-stranded DNA (dsDNA) substrates. In terms of biological role, hydrolysis of the deoxyribose N-glycosidic bond to excise 3-methyladenine, and 7-methylguanine from the damaged DNA polymer formed by alkylation lesions. The polypeptide is DNA-3-methyladenine glycosylase (Mpg) (Mus musculus (Mouse)).